We begin with the raw amino-acid sequence, 209 residues long: Uracil phosphoribosyltransferase (209 aa).

Residues Arg79, Arg104, and 131 to 139 (DPMLATGGS) contribute to the 5-phospho-alpha-D-ribose 1-diphosphate site. Residues Ile194 and 199-201 (GDA) each bind uracil. Asp200 serves as a coordination point for 5-phospho-alpha-D-ribose 1-diphosphate.

This sequence belongs to the UPRTase family. It depends on Mg(2+) as a cofactor.

The enzyme catalyses UMP + diphosphate = 5-phospho-alpha-D-ribose 1-diphosphate + uracil. The protein operates within pyrimidine metabolism; UMP biosynthesis via salvage pathway; UMP from uracil: step 1/1. With respect to regulation, allosterically activated by GTP. Catalyzes the conversion of uracil and 5-phospho-alpha-D-ribose 1-diphosphate (PRPP) to UMP and diphosphate. This is Uracil phosphoribosyltransferase from Pediococcus pentosaceus (strain ATCC 25745 / CCUG 21536 / LMG 10740 / 183-1w).